The primary structure comprises 276 residues: Large ribosomal subunit protein uL2 (276 aa).

A disordered region spans residues 226–276; the sequence is MNSVDHPHGGGEGKTSGGRHPVSPWGTPTKGYKTRSNKRTDKLILRHRNKG.

This sequence belongs to the universal ribosomal protein uL2 family. In terms of assembly, part of the 50S ribosomal subunit. Forms a bridge to the 30S subunit in the 70S ribosome.

One of the primary rRNA binding proteins. Required for association of the 30S and 50S subunits to form the 70S ribosome, for tRNA binding and peptide bond formation. It has been suggested to have peptidyltransferase activity; this is somewhat controversial. Makes several contacts with the 16S rRNA in the 70S ribosome. The protein is Large ribosomal subunit protein uL2 of Vesicomyosocius okutanii subsp. Calyptogena okutanii (strain HA).